The primary structure comprises 138 residues: Sec-independent protein translocase protein TatB (138 aa).

The helical transmembrane segment at 1-21 (MFDIGATELLVIAIVAILVIG) threads the bilayer. Positions 74–138 (MAKHPADQMQ…EPRLPLEGRD (65 aa)) are disordered. Low complexity predominate over residues 83–97 (QPLDAPDPALSAAEA). The segment covering 98 to 138 (RAAHTEAAKPARAAEETQADRASADEHPAASEPRLPLEGRD) has biased composition (basic and acidic residues).

This sequence belongs to the TatB family. As to quaternary structure, the Tat system comprises two distinct complexes: a TatABC complex, containing multiple copies of TatA, TatB and TatC subunits, and a separate TatA complex, containing only TatA subunits. Substrates initially bind to the TatABC complex, which probably triggers association of the separate TatA complex to form the active translocon.

The protein resides in the cell inner membrane. Part of the twin-arginine translocation (Tat) system that transports large folded proteins containing a characteristic twin-arginine motif in their signal peptide across membranes. Together with TatC, TatB is part of a receptor directly interacting with Tat signal peptides. TatB may form an oligomeric binding site that transiently accommodates folded Tat precursor proteins before their translocation. The polypeptide is Sec-independent protein translocase protein TatB (Erythrobacter litoralis (strain HTCC2594)).